Consider the following 154-residue polypeptide: UPF0178 protein Gbem_2221 (154 aa).

This sequence belongs to the UPF0178 family.

This is UPF0178 protein Gbem_2221 from Citrifermentans bemidjiense (strain ATCC BAA-1014 / DSM 16622 / JCM 12645 / Bem) (Geobacter bemidjiensis).